The chain runs to 362 residues: Prostaglandin E2 receptor EP2 subtype (362 aa).

Residues 1-24 are Extracellular-facing; the sequence is MDNFLNDSKLMEDCKSRQWLLSGE. Asn-6 carries an N-linked (GlcNAc...) asparagine glycan. Residues 25-48 form a helical membrane-spanning segment; sequence SPAISSVMFSAGVLGNLIALALLA. At 49-66 the chain is on the cytoplasmic side; that stretch reads RRWRGDTGCSAGSRTSIS. Residues 67–92 traverse the membrane as a helical segment; sequence LFHVLVTELVLTDLLGTCLISPVVLA. At 93–112 the chain is on the extracellular side; sequence SYSRNQTLVALAPESHACTY. A disulfide bond links Cys-110 and Cys-188. A helical transmembrane segment spans residues 113 to 133; that stretch reads FAFTMTFFSLATMLMLFAMAL. Residues 134 to 152 lie on the Cytoplasmic side of the membrane; that stretch reads ERYLSIGYPYFYRRHLSRR. Residues 153–177 traverse the membrane as a helical segment; it reads GGLAVLPVIYGASLLFCSLPLLNYG. Residues 178-199 are Extracellular-facing; that stretch reads EYVQYCPGTWCFIRHGRTAYLQ. A helical membrane pass occupies residues 200–224; the sequence is LYATMLLLLIVAVLACNISVILNLI. Residues 225–262 lie on the Cytoplasmic side of the membrane; sequence RMHRRSRRSRCGLSGSSLRGPGSRRRGERTSMAEETDH. Residues 234–255 form a disordered region; sequence RCGLSGSSLRGPGSRRRGERTS. A compositionally biased stretch (low complexity) spans 235-245; that stretch reads CGLSGSSLRGP. A helical membrane pass occupies residues 263 to 286; that stretch reads LILLAIMTITFAICSLPFTIFAYM. Residues 287 to 299 lie on the Extracellular side of the membrane; sequence DETSSLKEKWDLR. Residues 300 to 323 traverse the membrane as a helical segment; it reads ALRFLSVNSIIDPWVFAILRPPVL. The Cytoplasmic portion of the chain corresponds to 324-362; that stretch reads RLMRSVLCCRTSLRTQEAQQTSCSTQSSASKQTDLCGQL.

It belongs to the G-protein coupled receptor 1 family.

Its subcellular location is the cell membrane. Its function is as follows. Receptor for prostaglandin E2 (PGE2). The activity of this receptor is mediated by G(s) proteins that stimulate adenylate cyclase. The subsequent raise in intracellular cAMP is responsible for the relaxing effect of this receptor on smooth muscle. The protein is Prostaglandin E2 receptor EP2 subtype (Ptger2) of Mus musculus (Mouse).